The sequence spans 141 residues: Lutropin subunit beta (141 aa).

Positions 1-20 (MEMLQGLLLLLLLSMGGAWA) are cleaved as a signal peptide. Cystine bridges form between Cys29-Cys77, Cys43-Cys92, Cys46-Cys130, Cys54-Cys108, Cys58-Cys110, and Cys113-Cys120. Asn33 and Asn50 each carry an N-linked (GlcNAc...) asparagine glycan.

It belongs to the glycoprotein hormones subunit beta family. As to quaternary structure, heterodimer of a common alpha chain and a unique beta chain which confers biological specificity to thyrotropin, lutropin, follitropin and gonadotropin.

The protein resides in the secreted. Its function is as follows. Promotes spermatogenesis and ovulation by stimulating the testes and ovaries to synthesize steroids. This Gorilla gorilla gorilla (Western lowland gorilla) protein is Lutropin subunit beta (LHB).